The sequence spans 391 residues: Alanine racemase (391 aa).

The active-site Proton acceptor; specific for D-alanine is the K46. K46 carries the post-translational modification N6-(pyridoxal phosphate)lysine. R148 provides a ligand contact to substrate. Residue Y283 is the Proton acceptor; specific for L-alanine of the active site. M331 is a binding site for substrate.

This sequence belongs to the alanine racemase family. Requires pyridoxal 5'-phosphate as cofactor.

It carries out the reaction L-alanine = D-alanine. The protein operates within amino-acid biosynthesis; D-alanine biosynthesis; D-alanine from L-alanine: step 1/1. In terms of biological role, catalyzes the interconversion of L-alanine and D-alanine. May also act on other amino acids. The sequence is that of Alanine racemase (alr) from Streptomyces coelicolor (strain ATCC BAA-471 / A3(2) / M145).